A 154-amino-acid chain; its full sequence is Egg-lysin (154 aa).

Positions 1-18 (MKLLVLCIFAMMATLAMS) are cleaved as a signal peptide.

In terms of assembly, homodimer. Sperm.

Functionally, dissolves the egg vitelline layer nonenzymatically during fertilization. It creates a hole of about 3 mu-m in diameter through which the sperm pass. This is Egg-lysin from Haliotis sorenseni (White abalone).